Consider the following 101-residue polypeptide: Small ribosomal subunit protein bS18c (101 aa).

Basic residues predominate over residues 1 to 19; sequence MDKSKRPFRKSKRSFRKRL. Residues 1–23 are disordered; that stretch reads MDKSKRPFRKSKRSFRKRLPPIG.

This sequence belongs to the bacterial ribosomal protein bS18 family. In terms of assembly, part of the 30S ribosomal subunit.

Its subcellular location is the plastid. The protein resides in the chloroplast. This is Small ribosomal subunit protein bS18c from Chloranthus spicatus (Chulantree).